The chain runs to 123 residues: MVRLVGVDLPRNKRIAYALTYIHGIGLTSARKIIEIANINPETRTVDLTTEETVALRQTLEESDLKLEGDLRRFNGLNIKRLNEINCHRGKRHRNNLPVRGQRTRTNARSRRGSKKTVTGKKK.

The tract at residues arginine 89 to lysine 123 is disordered. Positions glutamine 102 to lysine 123 are enriched in basic residues.

Belongs to the universal ribosomal protein uS13 family. In terms of assembly, part of the 30S ribosomal subunit.

It localises to the plastid. The protein localises to the chloroplast. Its function is as follows. Located at the top of the head of the 30S subunit, it contacts several helices of the 16S rRNA. The chain is Small ribosomal subunit protein uS13c from Phaeodactylum tricornutum (strain CCAP 1055/1).